The primary structure comprises 409 residues: Sperm equatorial segment protein 1 (409 aa).

A signal peptide spans 1–18; it reads MKPVVLVALLWLWPSSFL. Asn-132 carries an N-linked (GlcNAc...) asparagine glycan. Residues 141–223 are disordered; sequence EPYIEKEPEP…TTNTQGTPNT (83 aa). A compositionally biased stretch (acidic residues) spans 167-177; that stretch reads PEPEPESESAP. Positions 198 to 208 are enriched in polar residues; it reads NKVRTGTSRMS. The span at 209 to 223 shows a compositional bias: low complexity; it reads TVITQTTNTQGTPNT.

It belongs to the SPESP1 family. In terms of processing, glycosylated. In testis there are two predominant forms of 77- and 67-kDa and a form of 47-kDa, whereas in epididymal sperm from caput, corpus, and cauda there are two forms of 47- and 43-kDa. Testis forms contain complex carbohydrate residues. Epididymal sperm forms are N-glycosylated. Then undergoes significant glycosylation in the testis and that the majority of these glycoconjugates are removed by the time sperm reach the caput epididymis.

It localises to the cytoplasmic vesicle. The protein resides in the secretory vesicle. The protein localises to the acrosome. Its function is as follows. Involved in fertilization ability of sperm. This Rattus norvegicus (Rat) protein is Sperm equatorial segment protein 1.